The following is a 130-amino-acid chain: Guanyl-specific ribonuclease T1 (130 aa).

Positions 1–26 (MMYSKLLTLTTLLLPTALALPSLVER) are cleaved as a signal peptide. 2 cysteine pairs are disulfide-bonded: Cys-28–Cys-36 and Cys-32–Cys-129. His-66 is an active-site residue. Glu-84 (proton acceptor) is an active-site residue. The Proton donor role is filled by His-118.

Belongs to the ribonuclease N1/T1 family. As to quaternary structure, monomer.

The enzyme catalyses [RNA] containing guanosine + H2O = an [RNA fragment]-3'-guanosine-3'-phosphate + a 5'-hydroxy-ribonucleotide-3'-[RNA fragment].. The chain is Guanyl-specific ribonuclease T1 (rntA) from Aspergillus oryzae (strain ATCC 42149 / RIB 40) (Yellow koji mold).